A 422-amino-acid chain; its full sequence is Probable Na(+)/H(+) antiporter 2 (422 aa).

Transmembrane regions (helical) follow at residues isoleucine 3–isoleucine 23, glycine 28–isoleucine 48, isoleucine 52–glycine 72, isoleucine 93–leucine 113, isoleucine 119–phenylalanine 139, valine 157–alanine 177, isoleucine 183–phenylalanine 203, tyrosine 216–phenylalanine 236, tyrosine 242–valine 262, leucine 281–leucine 301, leucine 307–isoleucine 327, isoleucine 341–tyrosine 361, and leucine 384–alanine 404.

It belongs to the monovalent cation:proton antiporter 1 (CPA1) transporter (TC 2.A.36) family.

Its subcellular location is the cell membrane. In terms of biological role, this is probably a Na(+)/H(+) antiporter. The polypeptide is Probable Na(+)/H(+) antiporter 2 (Methanocaldococcus jannaschii (strain ATCC 43067 / DSM 2661 / JAL-1 / JCM 10045 / NBRC 100440) (Methanococcus jannaschii)).